The following is a 206-amino-acid chain: Flavin reductase (NADPH) (206 aa).

NADP(+)-binding residues include glycine 10, threonine 12, glycine 13, asparagine 14, threonine 15, arginine 35, serine 38, and arginine 39. Position 42 is a phosphoserine (serine 42). Residues aspartate 54, valine 55, leucine 75, glycine 76, and arginine 78 each coordinate NADP(+). Serine 82 bears the Phosphoserine mark. Positions 87, 109, 132, 153, and 154 each coordinate NADP(+). The active-site S-nitroso-cysteine intermediate; for S-nitroso-CoA-dependent nitrosyltransferase activity is the cysteine 109. Cysteine 188 (S-nitroso-cysteine intermediate; for S-nitroso-CoA-dependent nitrosyltransferase activity) is an active-site residue.

In terms of assembly, monomer. As to expression, at least expressed in the liver and erythrocyte.

Its subcellular location is the cytoplasm. It carries out the reaction reduced riboflavin + NADP(+) = riboflavin + NADPH + 2 H(+). It catalyses the reaction bilirubin IXbeta + NADP(+) = biliverdin IXbeta + NADPH + H(+). The enzyme catalyses FMNH2 + NAD(+) = FMN + NADH + 2 H(+). The catalysed reaction is FMNH2 + NADP(+) = FMN + NADPH + 2 H(+). It carries out the reaction S-nitroso-CoA + L-cysteinyl-[protein] = S-nitroso-L-cysteinyl-[protein] + CoA. It catalyses the reaction L-cysteinyl-[SCAN] + S-nitroso-CoA = S-nitroso-L-cysteinyl-[SCAN] + CoA. The enzyme catalyses S-nitroso-L-cysteinyl-[SCAN] + L-cysteinyl-[protein] = L-cysteinyl-[SCAN] + S-nitroso-L-cysteinyl-[protein]. Enzyme that can both act as a NAD(P)H-dependent reductase and a S-nitroso-CoA-dependent nitrosyltransferase. Promotes fetal heme degradation during development. Also expressed in adult tissues, where it acts as a regulator of hematopoiesis, intermediary metabolism (glutaminolysis, glycolysis, TCA cycle and pentose phosphate pathway) and insulin signaling. Has a broad specificity oxidoreductase activity by catalyzing the NAD(P)H-dependent reduction of a variety of flavins, such as riboflavin, FAD or FMN, biliverdins, methemoglobin and PQQ (pyrroloquinoline quinone). Contributes to fetal heme catabolism by catalyzing reduction of biliverdin IXbeta into bilirubin IXbeta in the liver. Biliverdin IXbeta, which constitutes the major heme catabolite in the fetus is not present in adult. Does not reduce bilirubin IXalpha. Can also reduce the complexed Fe(3+) iron to Fe(2+) in the presence of FMN and NADPH. Acts as a protein nitrosyltransferase by catalyzing nitrosylation of cysteine residues of target proteins, such as HMOX2, INSR and IRS1. S-nitroso-CoA-dependent nitrosyltransferase activity is mediated via a 'ping-pong' mechanism: BLVRB first associates with both S-nitroso-CoA and protein substrate, nitric oxide group is then transferred from S-nitroso-CoA to Cys-109 and Cys-188 residues of BLVRB and from S-nitroso-BLVRB to the protein substrate. Inhibits insulin signaling by mediating nitrosylation of INSR and IRS1, leading to their inhibition. This chain is Flavin reductase (NADPH) (BLVRB), found in Bos taurus (Bovine).